Here is an 826-residue protein sequence, read N- to C-terminus: Ribonucleoside-diphosphate reductase large subunit (826 aa).

Residues Thr-171, 186–187 (SC), Gly-217, 387–391 (NLCAE), and 594–598 (PTSGC) contribute to the substrate site. A disulfide bridge connects residues Cys-187 and Cys-403. Catalysis depends on Asn-387, which acts as the Proton acceptor. The active-site Cysteine radical intermediate is the Cys-389. Glu-391 functions as the Proton acceptor in the catalytic mechanism. The tract at residues 747–769 (SVPREEQNERSPAEQMPPRPMEP) is disordered. Basic and acidic residues predominate over residues 749–758 (PREEQNERSP).

This sequence belongs to the ribonucleoside diphosphate reductase large chain family. As to quaternary structure, heterotetramer composed of a homodimer of the large subunit (R1) and a homodimer of the small subunit (R2). Larger multisubunit protein complex are also active, composed of (R1)n(R2)n.

The enzyme catalyses a 2'-deoxyribonucleoside 5'-diphosphate + [thioredoxin]-disulfide + H2O = a ribonucleoside 5'-diphosphate + [thioredoxin]-dithiol. Ribonucleoside-diphosphate reductase holoenzyme provides the precursors necessary for viral DNA synthesis. Allows virus growth in non-dividing cells, as well as reactivation from latency in infected hosts. Catalyzes the biosynthesis of deoxyribonucleotides from the corresponding ribonucleotides. The chain is Ribonucleoside-diphosphate reductase large subunit from Homo sapiens (Human).